The sequence spans 324 residues: Phospho-N-acetylmuramoyl-pentapeptide-transferase (324 aa).

The next 10 helical transmembrane spans lie at T9 to V29, T53 to I73, V77 to L97, F117 to A137, I147 to S167, L176 to F196, M201 to N221, I227 to L247, L253 to F273, and V304 to F324.

It belongs to the glycosyltransferase 4 family. MraY subfamily. Mg(2+) serves as cofactor.

It is found in the cell membrane. It catalyses the reaction UDP-N-acetyl-alpha-D-muramoyl-L-alanyl-gamma-D-glutamyl-meso-2,6-diaminopimeloyl-D-alanyl-D-alanine + di-trans,octa-cis-undecaprenyl phosphate = di-trans,octa-cis-undecaprenyl diphospho-N-acetyl-alpha-D-muramoyl-L-alanyl-D-glutamyl-meso-2,6-diaminopimeloyl-D-alanyl-D-alanine + UMP. It functions in the pathway cell wall biogenesis; peptidoglycan biosynthesis. Catalyzes the initial step of the lipid cycle reactions in the biosynthesis of the cell wall peptidoglycan: transfers peptidoglycan precursor phospho-MurNAc-pentapeptide from UDP-MurNAc-pentapeptide onto the lipid carrier undecaprenyl phosphate, yielding undecaprenyl-pyrophosphoryl-MurNAc-pentapeptide, known as lipid I. The sequence is that of Phospho-N-acetylmuramoyl-pentapeptide-transferase from Listeria monocytogenes serotype 4b (strain CLIP80459).